We begin with the raw amino-acid sequence, 359 residues long: 4-hydroxy-3-methylbut-2-en-1-yl diphosphate synthase (flavodoxin) (359 aa).

[4Fe-4S] cluster is bound by residues Cys-264, Cys-267, Cys-299, and Glu-306.

This sequence belongs to the IspG family. It depends on [4Fe-4S] cluster as a cofactor.

The catalysed reaction is (2E)-4-hydroxy-3-methylbut-2-enyl diphosphate + oxidized [flavodoxin] + H2O + 2 H(+) = 2-C-methyl-D-erythritol 2,4-cyclic diphosphate + reduced [flavodoxin]. The protein operates within isoprenoid biosynthesis; isopentenyl diphosphate biosynthesis via DXP pathway; isopentenyl diphosphate from 1-deoxy-D-xylulose 5-phosphate: step 5/6. In terms of biological role, converts 2C-methyl-D-erythritol 2,4-cyclodiphosphate (ME-2,4cPP) into 1-hydroxy-2-methyl-2-(E)-butenyl 4-diphosphate. This is 4-hydroxy-3-methylbut-2-en-1-yl diphosphate synthase (flavodoxin) from Helicobacter pylori (strain ATCC 700392 / 26695) (Campylobacter pylori).